A 718-amino-acid polypeptide reads, in one-letter code: Neutral ceramidase B (718 aa).

The N-terminal stretch at 1-20 (MINSFKKLIILISLVIILLS) is a signal peptide. Asparagine 224 and asparagine 252 each carry an N-linked (GlcNAc...) asparagine glycan. The Nucleophile role is filled by serine 298. Asparagine 358, asparagine 378, asparagine 391, asparagine 421, asparagine 422, asparagine 577, asparagine 610, and asparagine 614 each carry an N-linked (GlcNAc...) asparagine glycan.

Belongs to the neutral ceramidase family.

Its subcellular location is the secreted. It catalyses the reaction an N-acylsphing-4-enine + H2O = sphing-4-enine + a fatty acid. Its function is as follows. Hydrolyzes the sphingolipid ceramide into sphingosine and free fatty acid. This chain is Neutral ceramidase B (dcd2B), found in Dictyostelium discoideum (Social amoeba).